A 202-amino-acid polypeptide reads, in one-letter code: NADH dehydrogenase [ubiquinone] iron-sulfur protein 7, mitochondrial (202 aa).

The transit peptide at Met-1–Leu-56 directs the protein to the mitochondrion. Positions 77, 78, 142, and 172 each coordinate [4Fe-4S] cluster.

This sequence belongs to the complex I 20 kDa subunit family. In terms of assembly, complex I is composed of 45 different subunits This is a component of the iron-sulfur (IP) fragment of the enzyme. [4Fe-4S] cluster is required as a cofactor.

It localises to the mitochondrion. The enzyme catalyses a ubiquinone + NADH + 5 H(+)(in) = a ubiquinol + NAD(+) + 4 H(+)(out). Its function is as follows. Core subunit of the mitochondrial membrane respiratory chain NADH dehydrogenase (Complex I) that is believed to belong to the minimal assembly required for catalysis. Complex I functions in the transfer of electrons from NADH to the respiratory chain. The immediate electron acceptor for the enzyme is believed to be ubiquinone. The polypeptide is NADH dehydrogenase [ubiquinone] iron-sulfur protein 7, mitochondrial (NDHK) (Trypanosoma brucei brucei).